The primary structure comprises 33 residues: Large ribosomal subunit protein eL21 (33 aa).

Belongs to the eukaryotic ribosomal protein eL21 family. In terms of assembly, component of the large ribosomal subunit.

The protein resides in the cytoplasm. It localises to the cytosol. Its subcellular location is the endoplasmic reticulum. Its function is as follows. Component of the large ribosomal subunit. The ribosome is a large ribonucleoprotein complex responsible for the synthesis of proteins in the cell. The chain is Large ribosomal subunit protein eL21 (rpl21) from Xenopus laevis (African clawed frog).